The primary structure comprises 353 residues: N-acetyl-gamma-glutamyl-phosphate reductase (353 aa).

Residue cysteine 157 is part of the active site.

The protein belongs to the NAGSA dehydrogenase family. Type 1 subfamily.

It is found in the cytoplasm. It carries out the reaction N-acetyl-L-glutamate 5-semialdehyde + phosphate + NADP(+) = N-acetyl-L-glutamyl 5-phosphate + NADPH + H(+). It participates in amino-acid biosynthesis; L-arginine biosynthesis; N(2)-acetyl-L-ornithine from L-glutamate: step 3/4. In terms of biological role, catalyzes the NADPH-dependent reduction of N-acetyl-5-glutamyl phosphate to yield N-acetyl-L-glutamate 5-semialdehyde. This chain is N-acetyl-gamma-glutamyl-phosphate reductase, found in Bordetella avium (strain 197N).